Consider the following 534-residue polypeptide: Peptide chain release factor 3 (534 aa).

Residues 9–278 enclose the tr-type G domain; it reads ARRRTFAIIS…FFVEHAPPPQ (270 aa). Residues 18 to 25, 86 to 90, and 140 to 143 each bind GTP; these read SHPDAGKT, DTPGH, and NKLD.

The protein belongs to the TRAFAC class translation factor GTPase superfamily. Classic translation factor GTPase family. PrfC subfamily.

The protein localises to the cytoplasm. Its function is as follows. Increases the formation of ribosomal termination complexes and stimulates activities of RF-1 and RF-2. It binds guanine nucleotides and has strong preference for UGA stop codons. It may interact directly with the ribosome. The stimulation of RF-1 and RF-2 is significantly reduced by GTP and GDP, but not by GMP. This Xanthomonas campestris pv. campestris (strain 8004) protein is Peptide chain release factor 3.